We begin with the raw amino-acid sequence, 298 residues long: Lipoyl synthase (298 aa).

The [4Fe-4S] cluster site is built by Cys-40, Cys-45, Cys-51, Cys-67, Cys-71, Cys-74, and Ser-280. The Radical SAM core domain maps to 53–269 (AVRRTATFMI…KEIALSKGFS (217 aa)).

The protein belongs to the radical SAM superfamily. Lipoyl synthase family. [4Fe-4S] cluster serves as cofactor.

The protein localises to the cytoplasm. The enzyme catalyses [[Fe-S] cluster scaffold protein carrying a second [4Fe-4S](2+) cluster] + N(6)-octanoyl-L-lysyl-[protein] + 2 oxidized [2Fe-2S]-[ferredoxin] + 2 S-adenosyl-L-methionine + 4 H(+) = [[Fe-S] cluster scaffold protein] + N(6)-[(R)-dihydrolipoyl]-L-lysyl-[protein] + 4 Fe(3+) + 2 hydrogen sulfide + 2 5'-deoxyadenosine + 2 L-methionine + 2 reduced [2Fe-2S]-[ferredoxin]. Its pathway is protein modification; protein lipoylation via endogenous pathway; protein N(6)-(lipoyl)lysine from octanoyl-[acyl-carrier-protein]. Catalyzes the radical-mediated insertion of two sulfur atoms into the C-6 and C-8 positions of the octanoyl moiety bound to the lipoyl domains of lipoate-dependent enzymes, thereby converting the octanoylated domains into lipoylated derivatives. This Geobacillus kaustophilus (strain HTA426) protein is Lipoyl synthase.